Reading from the N-terminus, the 171-residue chain is Der GTPase-activating protein YihI (171 aa).

Disordered regions lie at residues 1–99 and 145–171; these read MKKP…QAEL and LSYD…RGGN. Basic and acidic residues predominate over residues 20–30; the sequence is TREELNQEARD. Over residues 31 to 40 the composition is skewed to basic residues; it reads RKRLKKHRGH. The span at 147-160 shows a compositional bias: acidic residues; that stretch reads YDDDDEDDEEDEKQ.

This sequence belongs to the YihI family. As to quaternary structure, interacts with Der.

A GTPase-activating protein (GAP) that modifies Der/EngA GTPase function. May play a role in ribosome biogenesis. This is Der GTPase-activating protein YihI from Salmonella choleraesuis (strain SC-B67).